The primary structure comprises 380 residues: Phthiodiolone/phenolphthiodiolone dimycocerosates ketoreductase (380 aa).

Belongs to the mer family. Phthiodiolone/phenolphthiodiolone dimycocerosates ketoreductase subfamily.

Its function is as follows. Catalyzes the reduction of the keto moiety of phthiodiolone dimycocerosates (DIM B) and glycosylated phenolphthiodiolone dimycocerosates to form the intermediate compounds phthiotriol and glycosylated phenolphthiotriol dimycocerosates during phthiocerol dimycocerosates (DIM A) and glycosylated phenolphthiocerol dimycocerosates (PGL) biosynthesis. This Mycobacterium sp. (strain JLS) protein is Phthiodiolone/phenolphthiodiolone dimycocerosates ketoreductase.